The primary structure comprises 543 residues: CTP synthase (543 aa).

Positions 1-267 are amidoligase domain; that stretch reads MTKYVFVTGG…ATQVLNLLNL (267 aa). S13 lines the CTP pocket. Residue S13 participates in UTP binding. Residues 14 to 19 and D71 each bind ATP; that span reads SIGKGI. D71 and E141 together coordinate Mg(2+). Residues 148–150, 188–193, and K224 each bind CTP; these read DIE and KTKPTQ. UTP is bound by residues 188–193 and K224; that span reads KTKPTQ. Residues 292–534 enclose the Glutamine amidotransferase type-1 domain; the sequence is EVAIVGKYVR…LAAAAKNSNR (243 aa). G354 serves as a coordination point for L-glutamine. The active-site Nucleophile; for glutamine hydrolysis is the C381. L-glutamine contacts are provided by residues 382-385, E405, and R462; that span reads LGMQ. Catalysis depends on residues H507 and E509.

It belongs to the CTP synthase family. Homotetramer.

It catalyses the reaction UTP + L-glutamine + ATP + H2O = CTP + L-glutamate + ADP + phosphate + 2 H(+). It carries out the reaction L-glutamine + H2O = L-glutamate + NH4(+). The catalysed reaction is UTP + NH4(+) + ATP = CTP + ADP + phosphate + 2 H(+). It participates in pyrimidine metabolism; CTP biosynthesis via de novo pathway; CTP from UDP: step 2/2. With respect to regulation, allosterically activated by GTP, when glutamine is the substrate; GTP has no effect on the reaction when ammonia is the substrate. The allosteric effector GTP functions by stabilizing the protein conformation that binds the tetrahedral intermediate(s) formed during glutamine hydrolysis. Inhibited by the product CTP, via allosteric rather than competitive inhibition. Its function is as follows. Catalyzes the ATP-dependent amination of UTP to CTP with either L-glutamine or ammonia as the source of nitrogen. Regulates intracellular CTP levels through interactions with the four ribonucleotide triphosphates. The protein is CTP synthase of Thermosynechococcus vestitus (strain NIES-2133 / IAM M-273 / BP-1).